Reading from the N-terminus, the 215-residue chain is ATP-dependent Clp protease proteolytic subunit (215 aa).

Ser-111 functions as the Nucleophile in the catalytic mechanism. His-136 is a catalytic residue.

The protein belongs to the peptidase S14 family. Fourteen ClpP subunits assemble into 2 heptameric rings which stack back to back to give a disk-like structure with a central cavity, resembling the structure of eukaryotic proteasomes.

The protein localises to the cytoplasm. It carries out the reaction Hydrolysis of proteins to small peptides in the presence of ATP and magnesium. alpha-casein is the usual test substrate. In the absence of ATP, only oligopeptides shorter than five residues are hydrolyzed (such as succinyl-Leu-Tyr-|-NHMec, and Leu-Tyr-Leu-|-Tyr-Trp, in which cleavage of the -Tyr-|-Leu- and -Tyr-|-Trp bonds also occurs).. Functionally, cleaves peptides in various proteins in a process that requires ATP hydrolysis. Has a chymotrypsin-like activity. Plays a major role in the degradation of misfolded proteins. The chain is ATP-dependent Clp protease proteolytic subunit from Hamiltonella defensa subsp. Acyrthosiphon pisum (strain 5AT).